The following is an 872-amino-acid chain: Protein SEY1 (872 aa).

The Cytoplasmic portion of the chain corresponds to 1–749 (MVANGHFAGV…KRSAIGGITQ (749 aa)). Residues 49–307 (GFNYHLISVF…IPADGFAVYA (259 aa)) enclose the GB1/RHD3-type G domain. 59–66 (GSQSTGKS) serves as a coordination point for GTP. Positions 482-504 (SNYQQELSLYQKDLENIGGQLRR) form a coiled coil. Residues 676 to 704 (LDKWIGHTPSSATPADEEDLTPIGGVDED) form a disordered region. Over residues 690 to 704 (ADEEDLTPIGGVDED) the composition is skewed to acidic residues. Residues 750 to 770 (VPLYFYGLLLALGWNEIVAVL) form a helical membrane-spanning segment. The Lumenal portion of the chain corresponds to 771–773 (RNP). A helical membrane pass occupies residues 774–794 (AYFLLLFVCAVTAYVTYQLNL). Over 795 to 872 (WGPIIKMTEA…IDDADDDDDF (78 aa)) the chain is Cytoplasmic. Residues 849–872 (NRKSAGGFQNNRSHIDDADDDDDF) form a disordered region.

The protein belongs to the TRAFAC class dynamin-like GTPase superfamily. GB1/RHD3 GTPase family. RHD3 subfamily.

The protein resides in the endoplasmic reticulum membrane. Cooperates with the reticulon proteins and tubule-shaping DP1 family proteins to generate and maintain the structure of the tubular endoplasmic reticulum network. Has GTPase activity, which is required for its function in ER organization. This chain is Protein SEY1, found in Paracoccidioides brasiliensis (strain Pb18).